Here is a 123-residue protein sequence, read N- to C-terminus: Large ribosomal subunit protein uL14 (123 aa).

It belongs to the universal ribosomal protein uL14 family. In terms of assembly, part of the 50S ribosomal subunit. Forms a cluster with proteins L3 and L19. In the 70S ribosome, L14 and L19 interact and together make contacts with the 16S rRNA in bridges B5 and B8.

Binds to 23S rRNA. Forms part of two intersubunit bridges in the 70S ribosome. The chain is Large ribosomal subunit protein uL14 from Pectobacterium atrosepticum (strain SCRI 1043 / ATCC BAA-672) (Erwinia carotovora subsp. atroseptica).